Reading from the N-terminus, the 215-residue chain is Cytochrome b6 (215 aa).

Residues 32–52 (IFYCLGGVTLICFLVQFATGF) form a helical membrane-spanning segment. Cys-35 contacts heme c. Residues His-86 and His-100 each coordinate heme b. Transmembrane regions (helical) follow at residues 90–110 (ASMMVLAMILHTFRVYLTGGF), 116–136 (LTWVTGVLLACLTVSFGVTGY), and 186–206 (AHTFVLPWLTVVFMLMHFLMI). 2 residues coordinate heme b: His-187 and His-202.

It belongs to the cytochrome b family. PetB subfamily. As to quaternary structure, the 4 large subunits of the cytochrome b6-f complex are cytochrome b6, subunit IV (17 kDa polypeptide, PetD), cytochrome f and the Rieske protein, while the 4 small subunits are PetG, PetL, PetM and PetN. The complex functions as a dimer. It depends on heme b as a cofactor. The cofactor is heme c.

It localises to the cell inner membrane. In terms of biological role, component of the cytochrome b6-f complex, which mediates electron transfer between photosystem II (PSII) and photosystem I (PSI), cyclic electron flow around PSI, and state transitions. The sequence is that of Cytochrome b6 from Gloeobacter violaceus (strain ATCC 29082 / PCC 7421).